The sequence spans 386 residues: Queuine tRNA-ribosyltransferase (386 aa).

The active-site Proton acceptor is Asp-102. Substrate is bound by residues 102-106 (DSGGY), Asp-156, Gln-203, and Gly-230. The tract at residues 261–267 (GVGKPDD) is RNA binding. Asp-280 functions as the Nucleophile in the catalytic mechanism. An RNA binding; important for wobble base 34 recognition region spans residues 285-289 (TRSGR). 4 residues coordinate Zn(2+): Cys-318, Cys-320, Cys-323, and His-349.

This sequence belongs to the queuine tRNA-ribosyltransferase family. In terms of assembly, homodimer. Within each dimer, one monomer is responsible for RNA recognition and catalysis, while the other monomer binds to the replacement base PreQ1. The cofactor is Zn(2+).

It catalyses the reaction 7-aminomethyl-7-carbaguanine + guanosine(34) in tRNA = 7-aminomethyl-7-carbaguanosine(34) in tRNA + guanine. It participates in tRNA modification; tRNA-queuosine biosynthesis. In terms of biological role, catalyzes the base-exchange of a guanine (G) residue with the queuine precursor 7-aminomethyl-7-deazaguanine (PreQ1) at position 34 (anticodon wobble position) in tRNAs with GU(N) anticodons (tRNA-Asp, -Asn, -His and -Tyr). Catalysis occurs through a double-displacement mechanism. The nucleophile active site attacks the C1' of nucleotide 34 to detach the guanine base from the RNA, forming a covalent enzyme-RNA intermediate. The proton acceptor active site deprotonates the incoming PreQ1, allowing a nucleophilic attack on the C1' of the ribose to form the product. After dissociation, two additional enzymatic reactions on the tRNA convert PreQ1 to queuine (Q), resulting in the hypermodified nucleoside queuosine (7-(((4,5-cis-dihydroxy-2-cyclopenten-1-yl)amino)methyl)-7-deazaguanosine). This is Queuine tRNA-ribosyltransferase from Zymomonas mobilis subsp. mobilis (strain ATCC 31821 / ZM4 / CP4).